A 201-amino-acid polypeptide reads, in one-letter code: Mediator of RNA polymerase II transcription subunit 19 (201 aa).

The disordered stretch occupies residues 166-201 (GTGKSNAKKRKNRSNGSSMATPNSEMQDDVKRRRLE).

It belongs to the Mediator complex subunit 19 family. As to quaternary structure, component of the Mediator complex.

The protein localises to the nucleus. In terms of biological role, component of the Mediator complex, a coactivator involved in the regulated transcription of nearly all RNA polymerase II-dependent genes. Mediator functions as a bridge to convey information from gene-specific regulatory proteins to the basal RNA polymerase II transcription machinery. Mediator is recruited to promoters by direct interactions with regulatory proteins and serves as a scaffold for the assembly of a functional preinitiation complex with RNA polymerase II and the general transcription factors. The chain is Mediator of RNA polymerase II transcription subunit 19 (ROX3) from Candida glabrata (strain ATCC 2001 / BCRC 20586 / JCM 3761 / NBRC 0622 / NRRL Y-65 / CBS 138) (Yeast).